The following is a 95-amino-acid chain: ESAT-6-like protein EsxC (95 aa).

Belongs to the WXG100 family. ESAT-6 subfamily.

Its subcellular location is the secreted. The sequence is that of ESAT-6-like protein EsxC from Mycolicibacterium paratuberculosis (strain ATCC BAA-968 / K-10) (Mycobacterium paratuberculosis).